Consider the following 830-residue polypeptide: WD repeat-containing protein 75 (830 aa).

WD repeat units follow at residues 4–42 (EGVRVVRCGGSRLNFRRAVFSVDSKYIFCVSGDFVKVYS), 46–85 (EECVHILHGHTDLVSGILVNPSNHLQLYSCSFDGTIKLWD), 89–130 (GILI…QLVS), 144–183 (RQLTFVLDYINRSPKCIAFGNEGEYVAAVRDFYLSVYFFK), 192–230 (LPSTKNKKNAKNKFTCVACHPKEDCIASGHMDGKIRLWR), 236–275 (QKYTYTCLHWHHDMVMDLAFTVTGTSLLSGGRECVLVEWR), 278–317 (SEKNKEFLPRLGSSIEHISVSPAGDLFCTSHSDNKITVIH), 323–361 (SAVIQGLVKDRSISTGLMVDPRTKALVLNGKPGHLQFYS), and 375–422 (QQEY…KLWN). Residue lysine 426 forms a Glycyl lysine isopeptide (Lys-Gly) (interchain with G-Cter in SUMO2) linkage. WD repeat units follow at residues 429–473 (GFVL…KVWI), 486–524 (AWTCDFVGSYHKYQATNCCFSEDGSLLAVSFEEIVTIWD), 528–568 (WELK…CCWN), and 573–610 (SIQWSAKLNVRVMEPDPYSDHVAAVAQSSAGSDLFVFK). Phosphoserine is present on residues serine 663 and serine 671. Residue lysine 675 forms a Glycyl lysine isopeptide (Lys-Gly) (interchain with G-Cter in SUMO2) linkage. Positions 761–807 (KSAEEVPDDVDMEGNKESDDSDEEYDLTEKDKETNNNTDLGEDAIHQ) are disordered. Phosphoserine occurs at positions 778 and 781. At tyrosine 785 the chain carries Phosphotyrosine. The residue at position 811 (serine 811) is a Phosphoserine.

Component of the proposed t-UTP subcomplex of the ribosomal small subunit (SSU) processome. SSU processome is composed of more than 70 proteins and the RNA chaperone small nucleolar RNA (snoRNA) U3.

It localises to the nucleus. It is found in the nucleolus. Its function is as follows. Ribosome biogenesis factor. Part of the small subunit (SSU) processome, first precursor of the small eukaryotic ribosomal subunit. During the assembly of the SSU processome in the nucleolus, many ribosome biogenesis factors, an RNA chaperone and ribosomal proteins associate with the nascent pre-rRNA and work in concert to generate RNA folding, modifications, rearrangements and cleavage as well as targeted degradation of pre-ribosomal RNA by the RNA exosome. Involved in nucleolar processing of pre-18S ribosomal RNA. Required for optimal pre-ribosomal RNA transcription by RNA polymerase I. This Mus musculus (Mouse) protein is WD repeat-containing protein 75 (Wdr75).